A 213-amino-acid chain; its full sequence is GTP-binding protein yptV4 (213 aa).

13–21 (GDTGVGKSC) provides a ligand contact to GTP. The short motif at 35 to 43 (HDLTIGVEF) is the Effector region element. GTP-binding positions include 61-65 (DTAGQ), 119-122 (NKCD), and 149-151 (SAR). Residues 194–213 (AGPQAAKPGEGDARKSSSCC) form a disordered region. Residues 202–213 (GEGDARKSSSCC) are compositionally biased toward basic and acidic residues. 2 S-geranylgeranyl cysteine lipidation sites follow: C212 and C213.

This sequence belongs to the small GTPase superfamily. Rab family.

Its subcellular location is the cell membrane. Functionally, protein transport. Probably involved in vesicular traffic. The sequence is that of GTP-binding protein yptV4 (YPTV4) from Volvox carteri (Green alga).